Consider the following 430-residue polypeptide: Proteinase-activated receptor 1 (430 aa).

The signal sequence occupies residues 1 to 21 (MGPRRLLIVALGLSLCGPLLS). Residues 22–41 (SRVPMSQPESERTDATVNPR) constitute a propeptide, removed for receptor activation. The Extracellular segment spans residues 42–107 (SFFLRNPSEN…SGYLTSPWLT (66 aa)). 2 N-linked (GlcNAc...) asparagine glycosylation sites follow: N67 and N80. Residues 108-133 (LFMPSVYTIVFIVSLPLNVLAIAVFV) traverse the membrane as a helical segment. At 134–142 (LRMKVKKPA) the chain is on the cytoplasmic side. The chain crosses the membrane as a helical span at residues 143 to 162 (VVYMLHLAMADVLFVSVLPF). Residues 163 to 181 (KISYYFSGTDWQFGSGMCR) are Extracellular-facing. Cysteines 180 and 259 form a disulfide. Residues 182-203 (FATAAFYGNMYASIMLMTVISI) traverse the membrane as a helical segment. Topologically, residues 204 to 223 (DRFLAVVYPIQSLSWRTLGR) are cytoplasmic. A helical membrane pass occupies residues 224 to 244 (ANFTCVVIWVMAIMGVVPLLL). The Extracellular portion of the chain corresponds to 245 to 273 (KEQTTRVPGLNITTCHDVLSENLMQGFYS). N255 is a glycosylation site (N-linked (GlcNAc...) asparagine). A helical membrane pass occupies residues 274 to 293 (YYFSAFSAIFFLVPLIVSTV). Residues 294-316 (CYTSIIRCLSSSAVANRSKKSRA) lie on the Cytoplasmic side of the membrane. A helical transmembrane segment spans residues 317-339 (LFLSAAVFCIFIVCFGPTNVLLI). Residues 340-354 (VHYLFLSDSPGTEAA) are Extracellular-facing. A helical membrane pass occupies residues 355–379 (YFAYLLCVCVSSVSCCIDPLIYYYA). The Cytoplasmic portion of the chain corresponds to 380–430 (SSECQRHLYSILCCKESSDPNSCNSTGQLMPSKMDTCSSHLNNSIYKKLLA). The residue at position 423 (S423) is a Phosphoserine.

Belongs to the G-protein coupled receptor 1 family. In terms of processing, proteolytic cleavage by thrombin generates a new N-terminus that functions as a tethered ligand. Also proteolytically cleaved by cathepsin CTSG. Phosphorylated in the C-terminal tail; probably mediating desensitization prior to the uncoupling and internalization of the receptor.

It is found in the cell membrane. High affinity receptor that binds the activated thrombin, leading to calcium release from intracellular stores. The thrombin-activated receptor signaling pathway is mediated through PTX-insensitive G proteins, activation of phospholipase C resulting in the production of 1D-myo-inositol 1,4,5-trisphosphate (InsP3) which binds to InsP3 receptors causing calcium release from the stores. In astrocytes, the calcium released into the cytosol allows the Ca(2+)-dependent release of L-glutamate into the synaptic cleft through BEST1, that targets the neuronal postsynaptic GRIN2A/NMDAR receptor resulting in the synaptic plasticity regulation. May play a role in platelets activation and in vascular development. Mediates up-regulation of pro-inflammatory cytokines, such as MCP-1/CCL2 and IL6, triggered by coagulation factor Xa (F10) in cardiac fibroblasts and umbilical vein endothelial cells. This Mus musculus (Mouse) protein is Proteinase-activated receptor 1.